Here is a 308-residue protein sequence, read N- to C-terminus: tRNA dimethylallyltransferase (308 aa).

Residue 11-18 (GPTGIGKT) participates in ATP binding. 13–18 (TGIGKT) is a binding site for substrate. Residues 36–39 (DSMQ) are interaction with substrate tRNA.

This sequence belongs to the IPP transferase family. As to quaternary structure, monomer. It depends on Mg(2+) as a cofactor.

The enzyme catalyses adenosine(37) in tRNA + dimethylallyl diphosphate = N(6)-dimethylallyladenosine(37) in tRNA + diphosphate. Functionally, catalyzes the transfer of a dimethylallyl group onto the adenine at position 37 in tRNAs that read codons beginning with uridine, leading to the formation of N6-(dimethylallyl)adenosine (i(6)A). This Lactobacillus gasseri (strain ATCC 33323 / DSM 20243 / BCRC 14619 / CIP 102991 / JCM 1131 / KCTC 3163 / NCIMB 11718 / NCTC 13722 / AM63) protein is tRNA dimethylallyltransferase.